Consider the following 87-residue polypeptide: Small ribosomal subunit protein uS17 (87 aa).

This sequence belongs to the universal ribosomal protein uS17 family. As to quaternary structure, part of the 30S ribosomal subunit.

One of the primary rRNA binding proteins, it binds specifically to the 5'-end of 16S ribosomal RNA. The polypeptide is Small ribosomal subunit protein uS17 (Onion yellows phytoplasma (strain OY-M)).